Here is a 1383-residue protein sequence, read N- to C-terminus: NPC intracellular cholesterol transporter 1 homolog 1 (1383 aa).

The first 20 residues, 1–20, serve as a signal peptide directing secretion; the sequence is MKQLLIFCLLFGSIFHHGDA. 8 disulfides stabilise this stretch: Cys22/Cys76, Cys28/Cys39, Cys65/Cys111, Cys77/Cys115, Cys99/Cys246, Cys102/Cys167, Cys182/Cys187, and Cys235/Cys251. Residue Asn42 is glycosylated (N-linked (GlcNAc...) asparagine). N-linked (GlcNAc...) asparagine glycosylation is present at Asn231. 2 helical membrane-spanning segments follow: residues 282-302 and 353-373; these read IFVM…GFVF and PKSH…GMIY. Asn447 is a glycosylation site (N-linked (GlcNAc...) asparagine). Intrachain disulfides connect Cys464–Cys474 and Cys526–Cys541. N-linked (GlcNAc...) asparagine glycosylation is present at Asn558. A run of 6 helical transmembrane segments spans residues 627–647, 665–685, 697–717, 746–766, 780–800, and 856–876; these read EIVT…FSLG, ICLG…SWGI, ALVV…FMVV, TMPA…IGGF, GLAV…LFVW, and IITG…SSKI. An SSD domain is found at 627-800; the sequence is EIVTVVIALA…CTIFLALFVW (174 aa). 4 cysteine pairs are disulfide-bonded: Cys929–Cys934, Cys976–Cys1046, Cys977–Cys1005, and Cys988–Cys1002. Asn993 and Asn1082 each carry an N-linked (GlcNAc...) asparagine glycan. The next 5 helical transmembrane spans lie at 1126 to 1146, 1157 to 1177, 1179 to 1199, 1226 to 1246, and 1260 to 1280; these read IMPI…GIIC, ACAV…MYIF, IPVN…LIEF, IGPI…MFLS, and LFLI…PILL.

It belongs to the patched family.

Its subcellular location is the membrane. The enzyme catalyses cholesterol(in) = cholesterol(out). Functionally, involved in the uptake or utilization of cholesterol. Ncr-1 and ncr-2 act redundantly to prevent dauer larva formation under favorable growth conditions, and are required for the normal functioning of ADF, ASI and ASG neurons. In Caenorhabditis elegans, this protein is NPC intracellular cholesterol transporter 1 homolog 1.